Consider the following 224-residue polypeptide: Orotate phosphoribosyltransferase (224 aa).

5-phospho-alpha-D-ribose 1-diphosphate is bound by residues Lys-26, 73–74 (YK), Arg-100, Lys-101, Lys-104, His-106, and 127–135 (EDVTTSGKS). Residues Thr-131 and Arg-160 each coordinate orotate.

Belongs to the purine/pyrimidine phosphoribosyltransferase family. PyrE subfamily. As to quaternary structure, homodimer. The cofactor is Mg(2+).

The enzyme catalyses orotidine 5'-phosphate + diphosphate = orotate + 5-phospho-alpha-D-ribose 1-diphosphate. Its pathway is pyrimidine metabolism; UMP biosynthesis via de novo pathway; UMP from orotate: step 1/2. Catalyzes the transfer of a ribosyl phosphate group from 5-phosphoribose 1-diphosphate to orotate, leading to the formation of orotidine monophosphate (OMP). In Clostridium botulinum (strain Eklund 17B / Type B), this protein is Orotate phosphoribosyltransferase.